Reading from the N-terminus, the 513-residue chain is MPQSAEKILDHAPLFREPEYRQMLAEKKLNFECPHPERLVTDQREYSKGWEYREKNLAREALVVNPAKACQPLGAVFAAAGFERTMSFVHGSQGCVAYYRSHLSRHFKEPASAVSSSMTEDAAVFGGLKNMVDGLANTYALYDPKMIAVSTTCMAEVIGDDLHGFIENAKSEGAVPPEFDVPFAHTPAFVGSHVDGYDSMVKGILEHFWKGQARTQAAGTINIIPGFDGFCVGNNRELQRLLTLMGVSYTFIQDASDQFDTPSDGEYRMYDGGTTIKALRAALNAEATLSLQHYNSRKTLEYCREVGQATAAFHYPLGINATDAFLMKVSAISGREIPETIRLERGRLVDAMADSQSWLHGKTYAIYGDPDFVYAMARFVMETGGEPRHCLATNGTAAWQAEMTELLASSPFGKQAKVWPGKDLWALRSLLFTEPVDLLIGNSYGKYLERDTGTPLIRLMFPIFDRHHHHRFPLMGYQGGLRLLTTILDTIFDRLDRETMQTAVTDYSYDLTR.

Cysteine 70, cysteine 95, and cysteine 153 together coordinate [8Fe-7S] cluster.

This sequence belongs to the NifD/NifK/NifE/NifN family. As to quaternary structure, tetramer of two alpha and two beta chains. Forms complex with the iron protein (nitrogenase component 2). The cofactor is [8Fe-7S] cluster.

The catalysed reaction is N2 + 8 reduced [2Fe-2S]-[ferredoxin] + 16 ATP + 16 H2O = H2 + 8 oxidized [2Fe-2S]-[ferredoxin] + 2 NH4(+) + 16 ADP + 16 phosphate + 6 H(+). Its function is as follows. This molybdenum-iron protein is part of the nitrogenase complex that catalyzes the key enzymatic reactions in nitrogen fixation. The chain is Nitrogenase molybdenum-iron protein beta chain (nifK1) from Sinorhizobium fredii (strain NBRC 101917 / NGR234).